The sequence spans 457 residues: Exodeoxyribonuclease 7 large subunit (457 aa).

The protein belongs to the XseA family. In terms of assembly, heterooligomer composed of large and small subunits.

The protein localises to the cytoplasm. It carries out the reaction Exonucleolytic cleavage in either 5'- to 3'- or 3'- to 5'-direction to yield nucleoside 5'-phosphates.. Functionally, bidirectionally degrades single-stranded DNA into large acid-insoluble oligonucleotides, which are then degraded further into small acid-soluble oligonucleotides. This is Exodeoxyribonuclease 7 large subunit from Cronobacter sakazakii (strain ATCC BAA-894) (Enterobacter sakazakii).